A 972-amino-acid polypeptide reads, in one-letter code: FHF complex subunit HOOK-interacting protein 1B (972 aa).

Disordered stretches follow at residues 465–548 (APSP…GELE) and 573–644 (SAPY…SWPE). A Phosphoserine modification is found at serine 467. Positions 478–501 (RGPGSPSVDSSSVTTVPRPSTPSR) are enriched in low complexity. 4 positions are modified to phosphoserine: serine 510, serine 523, serine 529, and serine 533. Over residues 523 to 535 (SPGLSASPASSPG) the composition is skewed to low complexity. A phosphoserine mark is found at serine 859 and serine 897.

It belongs to the FHIP family. As to quaternary structure, component of the FTS/Hook/FHIP complex (FHF complex), composed of AKTIP/FTS, FHIP1B, and one or more members of the Hook family of proteins HOOK1, HOOK2, and HOOK3. The FHF complex associates with the homotypic vesicular sorting complex (the HOPS complex).

In terms of biological role, component of the FTS/Hook/FHIP complex (FHF complex). The FHF complex may function to promote vesicle trafficking and/or fusion via the homotypic vesicular protein sorting complex (the HOPS complex). FHF complex promotes the distribution of AP-4 complex to the perinuclear area of the cell. The polypeptide is FHF complex subunit HOOK-interacting protein 1B (Homo sapiens (Human)).